Consider the following 265-residue polypeptide: Undecaprenyl-diphosphatase (265 aa).

8 consecutive transmembrane segments (helical) span residues 1–21 (MDWF…FLPI), 39–59 (QGLA…MMYY), 83–103 (LKLG…GFLG), 114–134 (ALVI…SDAF), 144–164 (LGVA…IPGT), 188–208 (SFLL…KDLI), 218–238 (MMAL…VFFI), and 244–264 (VGML…LFWL).

Belongs to the UppP family.

The protein resides in the cell inner membrane. The enzyme catalyses di-trans,octa-cis-undecaprenyl diphosphate + H2O = di-trans,octa-cis-undecaprenyl phosphate + phosphate + H(+). In terms of biological role, catalyzes the dephosphorylation of undecaprenyl diphosphate (UPP). Confers resistance to bacitracin. This is Undecaprenyl-diphosphatase from Alcanivorax borkumensis (strain ATCC 700651 / DSM 11573 / NCIMB 13689 / SK2).